The sequence spans 201 residues: Imidazoleglycerol-phosphate dehydratase (201 aa).

The protein belongs to the imidazoleglycerol-phosphate dehydratase family.

It localises to the cytoplasm. The catalysed reaction is D-erythro-1-(imidazol-4-yl)glycerol 3-phosphate = 3-(imidazol-4-yl)-2-oxopropyl phosphate + H2O. Its pathway is amino-acid biosynthesis; L-histidine biosynthesis; L-histidine from 5-phospho-alpha-D-ribose 1-diphosphate: step 6/9. In Prochlorococcus marinus subsp. pastoris (strain CCMP1986 / NIES-2087 / MED4), this protein is Imidazoleglycerol-phosphate dehydratase.